A 659-amino-acid polypeptide reads, in one-letter code: Protein FAM161A (659 aa).

The interval 34–59 (LGERQQQRTASVSPQRLPRTSMGTPA) is disordered. A coiled-coil region spans residues 96 to 120 (YVQVEKLKKAHLQNMEQLEKMYDKK). Disordered stretches follow at residues 165-190 (GSVS…EHSV) and 401-428 (LAPG…PKIS). The span at 408-426 (GTKKGKCYKPKEKQKHKPK) shows a compositional bias: basic residues. A coiled-coil region spans residues 531–557 (AIRKREKQRTKDYMKELEAMEQRVLNK). The segment at 594–659 (NGQSASVDEH…TDEDHSMEEI (66 aa)) is disordered. The span at 600 to 616 (VDEHVSVREENNPRAES) shows a compositional bias: basic and acidic residues. Acidic residues predominate over residues 637–650 (PESEEAQEEDAYST).

It belongs to the FAM161 family.

The protein resides in the cytoplasm. It localises to the cytoskeleton. Its subcellular location is the cilium basal body. The protein localises to the cell projection. It is found in the cilium. The protein resides in the microtubule organizing center. It localises to the centrosome. Its subcellular location is the centriole. Functionally, involved in ciliogenesis. This is Protein FAM161A (fam161a) from Xenopus tropicalis (Western clawed frog).